The chain runs to 842 residues: Protein P (842 aa).

Residues M1–Q177 are terminal protein domain (TP). Residues D178–L345 form a spacer region. Residues F184 to R238 are disordered. Positions R197 to P208 are enriched in low complexity. The span at S212–K228 shows a compositional bias: polar residues. Positions Q346–Q689 are polymerase/reverse transcriptase domain (RT). One can recognise a Reverse transcriptase domain in the interval E356–I599. Residues D428, D550, and D551 each coordinate Mg(2+).

The protein belongs to the hepadnaviridae P protein family.

The catalysed reaction is DNA(n) + a 2'-deoxyribonucleoside 5'-triphosphate = DNA(n+1) + diphosphate. It catalyses the reaction Endonucleolytic cleavage to 5'-phosphomonoester.. Activated by host HSP70 and HSP40 in vitro to be able to bind the epsilon loop of the pgRNA. Because deletion of the RNase H region renders the protein partly chaperone-independent, the chaperones may be needed indirectly to relieve occlusion of the RNA-binding site by this domain. Inhibited by several reverse-transcriptase inhibitors: Lamivudine, Adefovir and Entecavir. In terms of biological role, multifunctional enzyme that converts the viral RNA genome into dsDNA in viral cytoplasmic capsids. This enzyme displays a DNA polymerase activity that can copy either DNA or RNA templates, and a ribonuclease H (RNase H) activity that cleaves the RNA strand of RNA-DNA heteroduplexes in a partially processive 3'- to 5'-endonucleasic mode. Neo-synthesized pregenomic RNA (pgRNA) are encapsidated together with the P protein, and reverse-transcribed inside the nucleocapsid. Initiation of reverse-transcription occurs first by binding the epsilon loop on the pgRNA genome, and is initiated by protein priming, thereby the 5'-end of (-)DNA is covalently linked to P protein. Partial (+)DNA is synthesized from the (-)DNA template and generates the relaxed circular DNA (RC-DNA) genome. After budding and infection, the RC-DNA migrates in the nucleus, and is converted into a plasmid-like covalently closed circular DNA (cccDNA). The activity of P protein does not seem to be necessary for cccDNA generation, and is presumably released from (+)DNA by host nuclear DNA repair machinery. This Hepatitis B virus genotype G (isolate IG29227/2000) (HBV-G) protein is Protein P.